Here is a 207-residue protein sequence, read N- to C-terminus: MAFTEIKHPLIIDKLTRMRKTETSSKDFRENLSEIAQLMVYEIFRDLKLESVDIETPVSKTTGYTINQPVVLVPILRAGIGMLDGIQKLIPTARIAHIGLYRDEETLETHQYFAKTTKDIDKSYVIVVDPMLATGGSACKAIDIVKQWGAKEIKFVCLVAVEPGIKRLQEQHPDVEIYAASKDEKLNEKGYIVPGLGDAGDRIFGTK.

5-phospho-alpha-D-ribose 1-diphosphate contacts are provided by residues R77, R102, and 129 to 137 (DPMLATGGS). Uracil is bound by residues I192 and 197 to 199 (GDA). D198 contributes to the 5-phospho-alpha-D-ribose 1-diphosphate binding site.

It belongs to the UPRTase family. The cofactor is Mg(2+).

It catalyses the reaction UMP + diphosphate = 5-phospho-alpha-D-ribose 1-diphosphate + uracil. It participates in pyrimidine metabolism; UMP biosynthesis via salvage pathway; UMP from uracil: step 1/1. With respect to regulation, allosterically activated by GTP. Its function is as follows. Catalyzes the conversion of uracil and 5-phospho-alpha-D-ribose 1-diphosphate (PRPP) to UMP and diphosphate. This chain is Uracil phosphoribosyltransferase, found in Mycoplasma capricolum subsp. capricolum (strain California kid / ATCC 27343 / NCTC 10154).